We begin with the raw amino-acid sequence, 203 residues long: UPF0637 protein SSP1683 (203 aa).

The protein belongs to the UPF0637 family.

The chain is UPF0637 protein SSP1683 from Staphylococcus saprophyticus subsp. saprophyticus (strain ATCC 15305 / DSM 20229 / NCIMB 8711 / NCTC 7292 / S-41).